A 636-amino-acid polypeptide reads, in one-letter code: Fructose-1,6-bisphosphatase class 3 (636 aa).

Belongs to the FBPase class 3 family. Mn(2+) is required as a cofactor.

It carries out the reaction beta-D-fructose 1,6-bisphosphate + H2O = beta-D-fructose 6-phosphate + phosphate. It functions in the pathway carbohydrate biosynthesis; gluconeogenesis. The protein is Fructose-1,6-bisphosphatase class 3 of Streptococcus gordonii (strain Challis / ATCC 35105 / BCRC 15272 / CH1 / DL1 / V288).